The chain runs to 233 residues: MSNTPIELKGSNFTLSVLHLNDGSPKVIRQAISDKIAQAPQFLKNAPVVINVSAIADQTIDFKKLRRIVEDAGLRVVGISGSHDAQQKEAIIAAQLPILNEGKITKPAAQANNDKTNEVPINVRQKTKIIHTPVRSGQRIYAPNSDLVVLSNVSAGAELIADGNVHIYGVLRGRVLAGASGDQESHIFCTHLSAELVSIAGQYWLSDQIPTDFVGKSVQLSLQENELTIENLI.

Belongs to the MinC family. In terms of assembly, interacts with MinD and FtsZ.

Functionally, cell division inhibitor that blocks the formation of polar Z ring septums. Rapidly oscillates between the poles of the cell to destabilize FtsZ filaments that have formed before they mature into polar Z rings. Prevents FtsZ polymerization. The polypeptide is Probable septum site-determining protein MinC (Proteus mirabilis (strain HI4320)).